A 273-amino-acid polypeptide reads, in one-letter code: Putative pyruvate, phosphate dikinase regulatory protein (273 aa).

149 to 156 (GPSRTSKT) is an ADP binding site.

This sequence belongs to the pyruvate, phosphate/water dikinase regulatory protein family. PDRP subfamily.

The enzyme catalyses N(tele)-phospho-L-histidyl/L-threonyl-[pyruvate, phosphate dikinase] + ADP = N(tele)-phospho-L-histidyl/O-phospho-L-threonyl-[pyruvate, phosphate dikinase] + AMP + H(+). It carries out the reaction N(tele)-phospho-L-histidyl/O-phospho-L-threonyl-[pyruvate, phosphate dikinase] + phosphate + H(+) = N(tele)-phospho-L-histidyl/L-threonyl-[pyruvate, phosphate dikinase] + diphosphate. Functionally, bifunctional serine/threonine kinase and phosphorylase involved in the regulation of the pyruvate, phosphate dikinase (PPDK) by catalyzing its phosphorylation/dephosphorylation. This is Putative pyruvate, phosphate dikinase regulatory protein from Rickettsia prowazekii (strain Madrid E).